A 1339-amino-acid chain; its full sequence is Tuberous sclerosis 2 protein homolog (1339 aa).

A Phosphoserine modification is found at serine 1036. Residues 1109–1303 (ILANTNPSED…AERLRQLKRL (195 aa)) form the Rap-GAP domain.

In terms of assembly, interacts with tsc1.

The protein resides in the cytoplasm. It localises to the nucleus. Its function is as follows. Together with tsc1, required for uptake of various amino acids from the environment and for proper conjugation. Involved in induction of gene expression of permeases and genes required for meiosis upon nitrogen starvation. May act as a GTPase-activating protein (GAP) for the small GTPase rhb1. The protein is Tuberous sclerosis 2 protein homolog (tsc2) of Schizosaccharomyces pombe (strain 972 / ATCC 24843) (Fission yeast).